We begin with the raw amino-acid sequence, 84 residues long: Small ribosomal subunit protein bS16c (84 aa).

It belongs to the bacterial ribosomal protein bS16 family.

The protein resides in the plastid. The protein localises to the chloroplast. The protein is Small ribosomal subunit protein bS16c of Mesostigma viride (Green alga).